A 1093-amino-acid chain; its full sequence is Semaphorin 5c (1093 aa).

The N-terminal stretch at 1 to 34 is a signal peptide; sequence MNMLILKLPKMFSQLWLLLILSLLTLEGPQPSTG. An N-linked (GlcNAc...) asparagine glycan is attached at Asn48. The Sema domain maps to 50 to 495; it reads SRYISYQDLM…TDLALTRIPA (446 aa). Disulfide bonds link Cys118-Cys128 and Cys146-Cys155. 4 N-linked (GlcNAc...) asparagine glycosylation sites follow: Asn162, Asn182, Asn285, and Asn295. Cystine bridges form between Cys271–Cys376 and Cys296–Cys338. Asn341 carries an N-linked (GlcNAc...) asparagine glycan. The PSI domain occupies 497-546; sequence HCSRHVSQSSCLNSMDPYCGWNELVERCMPQPQDSSVLQHWHQAPQITCP. TSP type-1 domains follow at residues 553 to 605, 607 to 663, and 671 to 726; these read DGGW…TNCT, HGGW…PPCP, and DGGW…QSCQ. Asn603 carries N-linked (GlcNAc...) asparagine glycosylation. Disulfide bonds link Cys619/Cys656, Cys623/Cys662, Cys634/Cys646, Cys683/Cys720, Cys687/Cys725, and Cys698/Cys710. A glycan (N-linked (GlcNAc...) asparagine) is linked at Asn745. 3 TSP type-1 domains span residues 794-834, 850-901, and 904-953; these read DSAD…HACP, HGEW…VPCE, and LGWS…NECE. Cystine bridges form between Cys862–Cys895, Cys866–Cys900, and Cys877–Cys885. A helical transmembrane segment spans residues 960–980; sequence TATLPIVIFVGLLFTVACCLA. Residues Asn998 and Asn1046 are each glycosylated (N-linked (GlcNAc...) asparagine). Residues 1018–1056 form a disordered region; the sequence is PTKDYYDQRPKRQSSFRMPAKTSNLGNGNGTLNRNNMHQ. The segment covering 1041-1053 has biased composition (low complexity); sequence NLGNGNGTLNRNN.

This sequence belongs to the semaphorin family. As to expression, in egg chambers, high levels of expression in the follicle cells, with little to no expression in the germ cells (at protein level). In stage 3 to 7 egg chambers, planar polarized at the basal epithelial surface (at protein level).

The protein localises to the apical cell membrane. Its subcellular location is the lateral cell membrane. It localises to the endosome. Regulates the motility of migrating epithelial cells by providing guidance cues within the migratory environment and may also play a role in development of the olfactory system. May act as a positive axonal guidance cue. Function in neurons is essential for adult survival and is important for climbing behavior. Promotes collective migration of follicular epithelial cells in egg chambers, likely by acting at the leading edge of the basal epithelium cells to provide guidance cues across the cell boundary to the trailing edge of the cell ahead. The transmembrane receptor PlexA on the trailing edge of the cell ahead, appears to transduce this signal to suppress the formation of protrusions. Involved in olfactory avoidance behavior. This is Semaphorin 5c from Drosophila melanogaster (Fruit fly).